We begin with the raw amino-acid sequence, 181 residues long: ATP synthase subunit delta (181 aa).

The protein belongs to the ATPase delta chain family. As to quaternary structure, F-type ATPases have 2 components, F(1) - the catalytic core - and F(0) - the membrane proton channel. F(1) has five subunits: alpha(3), beta(3), gamma(1), delta(1), epsilon(1). F(0) has three main subunits: a(1), b(2) and c(10-14). The alpha and beta chains form an alternating ring which encloses part of the gamma chain. F(1) is attached to F(0) by a central stalk formed by the gamma and epsilon chains, while a peripheral stalk is formed by the delta and b chains.

It localises to the cell inner membrane. Functionally, f(1)F(0) ATP synthase produces ATP from ADP in the presence of a proton or sodium gradient. F-type ATPases consist of two structural domains, F(1) containing the extramembraneous catalytic core and F(0) containing the membrane proton channel, linked together by a central stalk and a peripheral stalk. During catalysis, ATP synthesis in the catalytic domain of F(1) is coupled via a rotary mechanism of the central stalk subunits to proton translocation. Its function is as follows. This protein is part of the stalk that links CF(0) to CF(1). It either transmits conformational changes from CF(0) to CF(1) or is implicated in proton conduction. This chain is ATP synthase subunit delta, found in Syntrophus aciditrophicus (strain SB).